The primary structure comprises 620 residues: MSKRQSSVQIRQLFGPALRSRISPASSELETLSPPRLSPRDPLGDMYPEESRGSGGVAAVDFLEGTYDYAAPNPATTPLYSQSSTGYYSAPLETNGPPSEGSLQSLGSGPTSPLVFVPSSPRLSPFMHPPSHHYLETTSTPVYRSSHQGASREDQCGSREDTCSLGELGAGAGAGGFEMAKDTRFCAVCSDYASGYHYGVWSCEGCKAFFKRSIQGHNDYMCPATNQCTIDRNRRKSCQACRLRKCYEVGMMKGGVRKDRIRILRRDKRRTGVGDGDKVVKGQEHKTVHYDGRKRSSTGGGGGGGGGRLSVTSIPPEQVLLLLQGAEPPILCSRQKLSRPYTEVTMMTLLTSMADKELVHMIAWAKKLPGFLQLSLHDQVLLLESSWLEVLMIGLIWRSIHCPGKLIFAQDLILDRNEGDCVEGMTEIFDMLLATASRFRVLKLKPEEFVCLKAIILLNSGAFSFCTGTMEPLHNSAAVQSMLDTITDALIHYISQSGYLAQEQARRQAQLLLLLSHIRHMSNKGMEHLYSMKCKNKVPLYDLLLEMLDAHRLHHPVRAPQSLSQVDRDPPSTSSGGGGIAPGSISASRGRIESPSRGPFAPSVLQYGGSRPDCTPALQD.

Polar residues-rich tracts occupy residues 1-10 and 101-111; these read MSKRQSSVQI and GSLQSLGSGPT. Disordered regions lie at residues 1–55 and 88–111; these read MSKR…RGSG and YSAP…SGPT. Positions 1–185 are modulating; sequence MSKRQSSVQI…GFEMAKDTRF (185 aa). 2 consecutive NR C4-type zinc fingers follow at residues 186-206 and 222-246; these read CAVC…CEGC and CPAT…LRKC. The nuclear receptor DNA-binding region spans 186–251; sequence CAVCSDYASG…RLRKCYEVGM (66 aa). Positions 252–314 are hinge; sequence MKGGVRKDRI…GGGRLSVTSI (63 aa). The disordered stretch occupies residues 286-308; the sequence is KTVHYDGRKRSSTGGGGGGGGGR. Residues 298–308 show a composition bias toward gly residues; it reads TGGGGGGGGGR. One can recognise an NR LBD domain in the interval 315–551; that stretch reads PPEQVLLLLQ…DLLLEMLDAH (237 aa). A disordered region spans residues 558 to 620; the sequence is RAPQSLSQVD…RPDCTPALQD (63 aa).

This sequence belongs to the nuclear hormone receptor family. NR3 subfamily. In terms of assembly, binds DNA as a homodimer. Can form a heterodimer with ER-beta. In terms of tissue distribution, widely expressed in brain, ovary, testis, and female liver.

It localises to the nucleus. Functionally, the steroid hormones and their receptors are involved in the regulation of eukaryotic gene expression and affect cellular proliferation and differentiation in target tissues. The chain is Estrogen receptor (esr1) from Oryzias latipes (Japanese rice fish).